A 388-amino-acid polypeptide reads, in one-letter code: Na(+)/H(+) antiporter NhaA (388 aa).

A run of 12 helical transmembrane segments spans residues 13 to 33 (AAGG…ANTP), 36 to 56 (GIYH…LEIA), 59 to 79 (LLLW…GLEV), 95 to 115 (VFPA…YLMF), 125 to 145 (GWAI…ALLG), 154 to 174 (VFLL…IALF), 179 to 199 (VSMA…FMNW), 213 to 233 (LVLW…GVII), 259 to 279 (VAFL…LQGV), 287 to 307 (LLPV…IFTF), 328 to 348 (VFAV…IASL), and 363 to 383 (LGIL…LRMS).

It belongs to the NhaA Na(+)/H(+) (TC 2.A.33) antiporter family.

It localises to the cell inner membrane. It catalyses the reaction Na(+)(in) + 2 H(+)(out) = Na(+)(out) + 2 H(+)(in). Na(+)/H(+) antiporter that extrudes sodium in exchange for external protons. This Serratia proteamaculans (strain 568) protein is Na(+)/H(+) antiporter NhaA.